The following is a 125-amino-acid chain: MKYGEKEIQEFDINAEENFWPNEHEKNYTINIELPEFMCLCPRSGYPDFAIMKLSYVPDKKVIELKALKLYINSFMYRHISHENSANEIFDALYSQLEPKSMKLIADFNPRGNVHTVIEIDSETF.

Cysteine 41 acts as the Thioimide intermediate in catalysis. Aspartate 48 serves as the catalytic Proton donor. Substrate-binding positions include 63-65 and 82-83; these read IEL and HE.

Belongs to the GTP cyclohydrolase I family. QueF type 1 subfamily.

It is found in the cytoplasm. It carries out the reaction 7-aminomethyl-7-carbaguanine + 2 NADP(+) = 7-cyano-7-deazaguanine + 2 NADPH + 3 H(+). Its pathway is tRNA modification; tRNA-queuosine biosynthesis. Functionally, catalyzes the NADPH-dependent reduction of 7-cyano-7-deazaguanine (preQ0) to 7-aminomethyl-7-deazaguanine (preQ1). The sequence is that of NADPH-dependent 7-cyano-7-deazaguanine reductase from Sulfurovum sp. (strain NBC37-1).